The chain runs to 200 residues: Holliday junction resolvase RecU (200 aa).

Residues T82, D84, E97, and Q116 each coordinate Mg(2+).

It belongs to the RecU family. Mg(2+) serves as cofactor.

It is found in the cytoplasm. It carries out the reaction Endonucleolytic cleavage at a junction such as a reciprocal single-stranded crossover between two homologous DNA duplexes (Holliday junction).. Endonuclease that resolves Holliday junction intermediates in genetic recombination. Cleaves mobile four-strand junctions by introducing symmetrical nicks in paired strands. Promotes annealing of linear ssDNA with homologous dsDNA. Required for DNA repair, homologous recombination and chromosome segregation. In Streptococcus sanguinis (strain SK36), this protein is Holliday junction resolvase RecU.